Consider the following 205-residue polypeptide: LIM domain-containing protein PLIM2b (205 aa).

LIM zinc-binding domains follow at residues 8 to 68 and 102 to 162; these read DKCN…LFKE and DKCA…LFME. Residues 177–205 form a disordered region; it reads RTASGNTLPPEPTEDVAVEAKEENGVSES. Residues 194 to 205 are compositionally biased toward basic and acidic residues; that stretch reads VEAKEENGVSES.

Interacts with F-actin. Predominantly expressed in flowers and in pollen grains. Detected in vasculature and roots.

It is found in the cytoplasm. The protein localises to the cytoskeleton. Binds to actin filaments and promotes cross-linking into thick bundles. Has an actin-stabilizing activity. The actin regulatory activities are inhibited by pH &gt; 6.8 but are [Ca(2+)] independent. The chain is LIM domain-containing protein PLIM2b from Arabidopsis thaliana (Mouse-ear cress).